A 700-amino-acid polypeptide reads, in one-letter code: Tectonic-2 (700 aa).

Positions 1–25 (MGSLSPLSFLWGLLLLQGVLRPLRG) are cleaved as a signal peptide. Residues 26-665 (DPVFIPPFIR…YYQGEPRPQC (640 aa)) are Extracellular-facing. Residues Asn76, Asn82, Asn146, Asn156, and Asn389 are each glycosylated (N-linked (GlcNAc...) asparagine). The chain crosses the membrane as a helical span at residues 666 to 682 (VAKGLMLLSLLMLAILL). At 683–700 (RHPWVGMCKAWSSASIQH) the chain is on the cytoplasmic side.

It belongs to the tectonic family. In terms of assembly, part of the tectonic-like complex (also named B9 complex).

The protein localises to the membrane. It localises to the cytoplasm. The protein resides in the cytoskeleton. It is found in the cilium basal body. In terms of biological role, component of the tectonic-like complex, a complex localized at the transition zone of primary cilia and acting as a barrier that prevents diffusion of transmembrane proteins between the cilia and plasma membranes. Required for hedgehog signaling transduction. This is Tectonic-2 (Tctn2) from Rattus norvegicus (Rat).